Reading from the N-terminus, the 297-residue chain is Phosphoribosylaminoimidazole-succinocarboxamide synthase (297 aa).

Belongs to the SAICAR synthetase family.

The enzyme catalyses 5-amino-1-(5-phospho-D-ribosyl)imidazole-4-carboxylate + L-aspartate + ATP = (2S)-2-[5-amino-1-(5-phospho-beta-D-ribosyl)imidazole-4-carboxamido]succinate + ADP + phosphate + 2 H(+). It functions in the pathway purine metabolism; IMP biosynthesis via de novo pathway; 5-amino-1-(5-phospho-D-ribosyl)imidazole-4-carboxamide from 5-amino-1-(5-phospho-D-ribosyl)imidazole-4-carboxylate: step 1/2. The chain is Phosphoribosylaminoimidazole-succinocarboxamide synthase (purC) from Mycobacterium leprae (strain TN).